A 415-amino-acid polypeptide reads, in one-letter code: Acetylornithine aminotransferase (415 aa).

Residues 115 to 116 (GA) and F148 each bind pyridoxal 5'-phosphate. R151 contributes to the N(2)-acetyl-L-ornithine binding site. Residue 239–242 (DEVQ) participates in pyridoxal 5'-phosphate binding. K268 bears the N6-(pyridoxal phosphate)lysine mark. S295 provides a ligand contact to N(2)-acetyl-L-ornithine. T296 provides a ligand contact to pyridoxal 5'-phosphate.

The protein belongs to the class-III pyridoxal-phosphate-dependent aminotransferase family. ArgD subfamily. Homodimer. Requires pyridoxal 5'-phosphate as cofactor.

It localises to the cytoplasm. The enzyme catalyses N(2)-acetyl-L-ornithine + 2-oxoglutarate = N-acetyl-L-glutamate 5-semialdehyde + L-glutamate. Its pathway is amino-acid biosynthesis; L-arginine biosynthesis; N(2)-acetyl-L-ornithine from L-glutamate: step 4/4. In Prochlorococcus marinus subsp. pastoris (strain CCMP1986 / NIES-2087 / MED4), this protein is Acetylornithine aminotransferase.